A 237-amino-acid chain; its full sequence is MVHLRKSLAPYWWPIPRKAGGVWAVRPSTGPHSLEYSLPLAVVVRDVLRYAKTLREARYIISRGYIKVDGVVRKDYKFPIGLMDVVEIVPTGEIYRVVPDEAKYYDLKPIPSSEAALKPLRVEGKTAVSGGRIQLHFHDGRNLILPPDVGRQIKTFDTVVYDLENKAIKTHLPLRLGQLAVVTHGGNIGFVGQFFEVVWTLKRRQSVVALRKGEEVRRTILDYIMVIGTEAPVVKIS.

Positions 38 to 110 (LPLAVVVRDV…EAKYYDLKPI (73 aa)) constitute an S4 RNA-binding domain.

The protein belongs to the eukaryotic ribosomal protein eS4 family.

This chain is Small ribosomal subunit protein eS4, found in Pyrobaculum calidifontis (strain DSM 21063 / JCM 11548 / VA1).